The following is a 1107-amino-acid chain: Dynein axonemal assembly factor 1 homolog (1107 aa).

6 LRR repeats span residues 34 to 56 (HLND…EEYV), 57 to 78 (GLKC…EYQT), 79 to 100 (ELKC…DSCK), 101 to 122 (QLDT…GHDI), 125 to 146 (VLNT…DHLR), and 150 to 171 (FVSV…KILG). Positions 184–223 (NPVVNEIPSYRKTLILECKNLTYLDTRPVFDRDRACAEAW) constitute an LRRCT domain. 6 disordered regions span residues 258 to 281 (HRGD…KASK), 428 to 487 (NESP…TLNV), 500 to 608 (ESKD…LEKE), 780 to 810 (KEEP…EHEQ), 834 to 855 (SSED…AEED), and 1070 to 1107 (AAHA…DNCD). The span at 428 to 437 (NESPLTSPSF) shows a compositional bias: polar residues. Residues 446–459 (EEIEPTDVEEEQQI) are compositionally biased toward acidic residues. The span at 500-512 (ESKDGELISKVES) shows a compositional bias: basic and acidic residues. Residues 531–544 (DNSESEPTDITNED) are compositionally biased toward acidic residues. A compositionally biased stretch (low complexity) spans 549–560 (SSSVSVTSSTDS). Polar residues predominate over residues 581–597 (NYRQDSTTSTDSENEVS). The segment covering 801–810 (LEVHSSEHEQ) has biased composition (basic and acidic residues). Residues 844–855 (DSSESSDSAEED) show a composition bias toward acidic residues. Residues 1083-1097 (VESKPVEIDGTKEET) are compositionally biased toward basic and acidic residues. A compositionally biased stretch (acidic residues) spans 1098 to 1107 (VDSELADNCD).

Belongs to the DNAAF1 family.

The protein resides in the cell projection. It is found in the cilium. Functionally, cilium-specific protein required for cilia structures. This is Dynein axonemal assembly factor 1 homolog from Aedes aegypti (Yellowfever mosquito).